The chain runs to 167 residues: uncharacterized protein (167 aa).

Its subcellular location is the mitochondrion. This is an uncharacterized protein from Marchantia polymorpha (Common liverwort).